The chain runs to 298 residues: Oxygen-dependent coproporphyrinogen-III oxidase (298 aa).

Serine 90 contacts substrate. Residues histidine 94 and histidine 104 each coordinate a divalent metal cation. Histidine 104 serves as the catalytic Proton donor. 106-108 (NVR) is a binding site for substrate. A divalent metal cation-binding residues include histidine 143 and histidine 173. The important for dimerization stretch occupies residues 238-273 (YVEFNLVWDRGTLFGLQSGGRTESILMSLPPIVKWR). Residue 256–258 (GGR) coordinates substrate.

The protein belongs to the aerobic coproporphyrinogen-III oxidase family. As to quaternary structure, homodimer. A divalent metal cation serves as cofactor.

It is found in the cytoplasm. The catalysed reaction is coproporphyrinogen III + O2 + 2 H(+) = protoporphyrinogen IX + 2 CO2 + 2 H2O. It participates in porphyrin-containing compound metabolism; protoporphyrin-IX biosynthesis; protoporphyrinogen-IX from coproporphyrinogen-III (O2 route): step 1/1. Its function is as follows. Involved in the heme biosynthesis. Catalyzes the aerobic oxidative decarboxylation of propionate groups of rings A and B of coproporphyrinogen-III to yield the vinyl groups in protoporphyrinogen-IX. The sequence is that of Oxygen-dependent coproporphyrinogen-III oxidase from Dechloromonas aromatica (strain RCB).